A 494-amino-acid chain; its full sequence is MKTFTITVKKTEGFKKFEVPVGLTILDALEYINKTYGENIQFRSSCKAGQCGSCAVMINKKSKLACKTKVEDNMIIEPLEGFDVISDLVVDREPYYKKIGTLRNYIQKKNEKISEKELDGLKLYPDDLKDVKKIRGCIDCLSCIAMCPARKYSNYPGPTLMRQLARFAFDPKDEIDREKEAFDENIYNCTTCGRCVEVCPKEIDIVHNAVEKLREKTFKKGYNLDSHLEVRKNVLSQNRSVPKEKTSFLEEVSDEYIVENEKMRVAFFTGCLVDFRLQEIGKSAIRVLNAHGVSVIIPKNQVCCGSPFIRTGQTDISESLKKQNLEIFNKLNVDSVVTLCAGCGSTLKNDYKEKKFKVMDITEVLVKVGLIDYKPLDITVTYHDPCHLRRGQKVYLEPRKILESIPKLKFIEMEIPDQCCGAGGGVRSGKPEVAEAIGKRKANMIYATDADYLITVCPFCEYHIRDSLTKYLKEHGLKKDIPVMNIISLLDKVI.

The 2Fe-2S ferredoxin-type domain maps to 4–82 (FTITVKKTEG…NMIIEPLEGF (79 aa)). [2Fe-2S] cluster contacts are provided by Cys-46, Cys-51, Cys-54, and Cys-66. 4Fe-4S ferredoxin-type domains follow at residues 127-157 (DLKD…NYPG) and 178-208 (EKEA…IVHN). [4Fe-4S] cluster-binding residues include Cys-137, Cys-140, Cys-143, Cys-147, Cys-189, Cys-192, Cys-195, and Cys-199.

This sequence belongs to the succinate dehydrogenase/fumarate reductase iron-sulfur protein family.

This is an uncharacterized protein from Methanococcus maripaludis (strain DSM 14266 / JCM 13030 / NBRC 101832 / S2 / LL).